The following is a 299-amino-acid chain: 4-diphosphocytidyl-2-C-methyl-D-erythritol kinase (299 aa).

Lysine 11 is a catalytic residue. Residue 94–104 (PQGGGLGGGSS) coordinates ATP. Residue aspartate 136 is part of the active site.

Belongs to the GHMP kinase family. IspE subfamily.

It carries out the reaction 4-CDP-2-C-methyl-D-erythritol + ATP = 4-CDP-2-C-methyl-D-erythritol 2-phosphate + ADP + H(+). It participates in isoprenoid biosynthesis; isopentenyl diphosphate biosynthesis via DXP pathway; isopentenyl diphosphate from 1-deoxy-D-xylulose 5-phosphate: step 3/6. In terms of biological role, catalyzes the phosphorylation of the position 2 hydroxy group of 4-diphosphocytidyl-2C-methyl-D-erythritol. This chain is 4-diphosphocytidyl-2-C-methyl-D-erythritol kinase, found in Bordetella pertussis (strain Tohama I / ATCC BAA-589 / NCTC 13251).